A 77-amino-acid polypeptide reads, in one-letter code: Immune protein Tsi2 (77 aa).

In terms of assembly, forms a heterotetramer with Tse2 consisting of two Tse2 dimers and two Tsi2 dimers. Formation of the complex inactivates Tse2 enzymatic activity.

Immunity protein that plays a role in preventing early activation of toxin Tse2. Binds to a large surface of Tse2 and thereby occludes the active site to specifically inhibits Tse2. This is Immune protein Tsi2 from Pseudomonas aeruginosa (strain ATCC 15692 / DSM 22644 / CIP 104116 / JCM 14847 / LMG 12228 / 1C / PRS 101 / PAO1).